The chain runs to 521 residues: Bifunctional purine biosynthesis protein PurH (521 aa).

One can recognise an MGS-like domain in the interval 1–145; that stretch reads MIKQALISVS…KNHRDVTVIV (145 aa).

It belongs to the PurH family.

It carries out the reaction (6R)-10-formyltetrahydrofolate + 5-amino-1-(5-phospho-beta-D-ribosyl)imidazole-4-carboxamide = 5-formamido-1-(5-phospho-D-ribosyl)imidazole-4-carboxamide + (6S)-5,6,7,8-tetrahydrofolate. It catalyses the reaction IMP + H2O = 5-formamido-1-(5-phospho-D-ribosyl)imidazole-4-carboxamide. It functions in the pathway purine metabolism; IMP biosynthesis via de novo pathway; 5-formamido-1-(5-phospho-D-ribosyl)imidazole-4-carboxamide from 5-amino-1-(5-phospho-D-ribosyl)imidazole-4-carboxamide (10-formyl THF route): step 1/1. It participates in purine metabolism; IMP biosynthesis via de novo pathway; IMP from 5-formamido-1-(5-phospho-D-ribosyl)imidazole-4-carboxamide: step 1/1. This is Bifunctional purine biosynthesis protein PurH from Burkholderia multivorans (strain ATCC 17616 / 249).